A 372-amino-acid polypeptide reads, in one-letter code: NAD(P)H-quinone oxidoreductase subunit 1 (372 aa).

8 helical membrane passes run 27–47 (IIWLPIPMLLVLVAAVVGVLV), 97–117 (ILFTAGPILVLVPVILSWLIV), 128–148 (VGIGIFLWIALSSIQPIGLLM), 176–196 (LALSVLAIVLMTNSLSTIDIV), 204–224 (ILSWNIWRQPVGFIVFWICAL), 266–286 (ILSALLVSILYLGGWGFPIPV), 308–328 (SIGIVMTVLKAYLLVFIAILL), and 347–367 (FLLPISLANLLITAGLKLAFP).

The protein belongs to the complex I subunit 1 family. NDH-1 is composed of at least 11 different subunits.

The protein localises to the cellular thylakoid membrane. It carries out the reaction a plastoquinone + NADH + (n+1) H(+)(in) = a plastoquinol + NAD(+) + n H(+)(out). The enzyme catalyses a plastoquinone + NADPH + (n+1) H(+)(in) = a plastoquinol + NADP(+) + n H(+)(out). In terms of biological role, NDH-1 shuttles electrons from an unknown electron donor, via FMN and iron-sulfur (Fe-S) centers, to quinones in the respiratory and/or the photosynthetic chain. The immediate electron acceptor for the enzyme in this species is believed to be plastoquinone. Couples the redox reaction to proton translocation, and thus conserves the redox energy in a proton gradient. The polypeptide is NAD(P)H-quinone oxidoreductase subunit 1 (Prochlorococcus marinus (strain MIT 9312)).